The primary structure comprises 85 residues: UPF0297 protein Clos_1665 (85 aa).

Belongs to the UPF0297 family.

The protein is UPF0297 protein Clos_1665 of Alkaliphilus oremlandii (strain OhILAs) (Clostridium oremlandii (strain OhILAs)).